A 239-amino-acid chain; its full sequence is Probable plastid-lipid-associated protein 8, chloroplastic (239 aa).

The transit peptide at 1-52 directs the protein to the chloroplast; that stretch reads MAATASSLTIASSFSEPRTQIHSSRRLNLPLQYSIPYKVLRSRSRRLGLVVS. Position 53 is an N-acetylserine (S53).

The protein belongs to the PAP/fibrillin family.

It is found in the plastid. Its subcellular location is the chloroplast. The sequence is that of Probable plastid-lipid-associated protein 8, chloroplastic (PAP8) from Arabidopsis thaliana (Mouse-ear cress).